A 357-amino-acid polypeptide reads, in one-letter code: Protein-glutamate methylesterase/protein-glutamine glutaminase (357 aa).

The Response regulatory domain occupies 3-120 (RVLVVDDSAF…SLDLYKIKEQ (118 aa)). Residue aspartate 54 is modified to 4-aspartylphosphate. The CheB-type methylesterase domain maps to 161–355 (PGTGRQIVCI…ASITSCVKKE (195 aa)). Residues serine 173, histidine 200, and aspartate 296 contribute to the active site.

The protein belongs to the CheB family. Post-translationally, phosphorylated by CheA. Phosphorylation of the N-terminal regulatory domain activates the methylesterase activity.

It is found in the cytoplasm. It carries out the reaction [protein]-L-glutamate 5-O-methyl ester + H2O = L-glutamyl-[protein] + methanol + H(+). The enzyme catalyses L-glutaminyl-[protein] + H2O = L-glutamyl-[protein] + NH4(+). In terms of biological role, involved in the modulation of the chemotaxis system; catalyzes the demethylation of specific methylglutamate residues introduced into the chemoreceptors (methyl-accepting chemotaxis proteins) by CheR. B.subtilis has an effective methylation-independent adaptation system but must utilize the methylation system for adaptation to high concentrations of attractant. In Bacillus subtilis (strain 168), this protein is Protein-glutamate methylesterase/protein-glutamine glutaminase.